The primary structure comprises 182 residues: Mu-like prophage FluMu protein gp45 (182 aa).

The disordered stretch occupies residues threonine 159–proline 182. Residues lysine 169–proline 182 show a composition bias toward basic and acidic residues.

It to phage Mu protein gp45.

The chain is Mu-like prophage FluMu protein gp45 from Haemophilus influenzae (strain ATCC 51907 / DSM 11121 / KW20 / Rd).